A 324-amino-acid polypeptide reads, in one-letter code: DNA repair and recombination protein RadA (324 aa).

107–114 is an ATP binding site; that stretch reads GEFGSGKS.

It belongs to the eukaryotic RecA-like protein family.

Functionally, involved in DNA repair and in homologous recombination. Binds and assemble on single-stranded DNA to form a nucleoprotein filament. Hydrolyzes ATP in a ssDNA-dependent manner and promotes DNA strand exchange between homologous DNA molecules. The sequence is that of DNA repair and recombination protein RadA from Methanoculleus marisnigri (strain ATCC 35101 / DSM 1498 / JR1).